The chain runs to 134 residues: Small ribosomal subunit protein uS11 (134 aa).

Belongs to the universal ribosomal protein uS11 family. In terms of assembly, part of the 30S ribosomal subunit. Interacts with proteins S7 and S18. Binds to IF-3.

Its function is as follows. Located on the platform of the 30S subunit, it bridges several disparate RNA helices of the 16S rRNA. Forms part of the Shine-Dalgarno cleft in the 70S ribosome. The polypeptide is Small ribosomal subunit protein uS11 (Corynebacterium glutamicum (strain R)).